The sequence spans 67 residues: Large ribosomal subunit protein uL29 (67 aa).

The protein belongs to the universal ribosomal protein uL29 family.

In Alkaliphilus oremlandii (strain OhILAs) (Clostridium oremlandii (strain OhILAs)), this protein is Large ribosomal subunit protein uL29.